The primary structure comprises 660 residues: MPKCPIPIRISFFSYFLKESRILSSNPVNFSIHLRFSSSVSVSPNPSMEVVENPLEAPISEKMFKSAPKMGSFKLGDSTLSSMIESYANSGDFDSVEKLLSRIRLENRVIIERSFIVVFRAYGKAHLPDKAVDLFHRMVDEFRCKRSVKSFNSVLNVIINEGLYHRGLEFYDYVVNSNMNMNISPNGLSFNLVIKALCKLRFVDRAIEVFRGMPERKCLPDGYTYCTLMDGLCKEERIDEAVLLLDEMQSEGCSPSPVIYNVLIDGLCKKGDLTRVTKLVDNMFLKGCVPNEVTYNTLIHGLCLKGKLDKAVSLLERMVSSKCIPNDVTYGTLINGLVKQRRATDAVRLLSSMEERGYHLNQHIYSVLISGLFKEGKAEEAMSLWRKMAEKGCKPNIVVYSVLVDGLCREGKPNEAKEILNRMIASGCLPNAYTYSSLMKGFFKTGLCEEAVQVWKEMDKTGCSRNKFCYSVLIDGLCGVGRVKEAMMVWSKMLTIGIKPDTVAYSSIIKGLCGIGSMDAALKLYHEMLCQEEPKSQPDVVTYNILLDGLCMQKDISRAVDLLNSMLDRGCDPDVITCNTFLNTLSEKSNSCDKGRSFLEELVVRLLKRQRVSGACTIVEVMLGKYLAPKTSTWAMIVREICKPKKINAAIDKCWRNLCT.

15 PPR repeats span residues 76 to 110 (GDST…NRVI), 111 to 141 (IERS…MVDE), 147 to 181 (SVKS…NMNM), 186 to 220 (NGLS…KCLP), 221 to 255 (DGYT…GCSP), 256 to 290 (SPVI…GCVP), 291 to 325 (NEVT…KCIP), 326 to 360 (NDVT…GYHL), 361 to 395 (NQHI…GCKP), 396 to 430 (NIVV…GCLP), 431 to 465 (NAYT…GCSR), 466 to 500 (NKFC…GIKP), 501 to 535 (DTVA…EEPK), 539 to 573 (DVVT…GCDP), and 574 to 609 (DVIT…LLKR).

The protein belongs to the PPR family. P subfamily.

In terms of biological role, may play a role in embryogenesis. The sequence is that of Pentatricopeptide repeat-containing protein At4g20090 (EMB1025) from Arabidopsis thaliana (Mouse-ear cress).